Reading from the N-terminus, the 477-residue chain is MSLTIAVVGRPNVGKSTLFNRLVGQKLALVCDKPGVTRDRRIHAAELQDLCFDVIDTAGLEEAGDHTLEGRMCSHTKAAINEADLILFMFDAKSGITPSDLNFASLVRKSGKPIVLVANKSESKAAVGVEYEAWSLGLGEPCPISAEHGLGLSDLRDAIMDAIGKERVFESKNAEKCVSVQSASVGDYVDDLEEKGSVCDESKQPLRIAVAGRPNTGKSTLINRMLGQDRLLTGPEAGLTRDSISVDWEWRGRHIKLFDTAGLRRKSKIQEKLEKLSVADTLRAIRFAEVVVIVFDATAPFEKQDLQIADLVIREGRVPIIAFNKWDLIENNSQVTLANLHEKCAHLLPQVPGLRAVPLSGQYGQGIDNLMENVMMMHRMWNRRISTAKLNRWLETIVAHHPPPAIFGRRLKVKYITQVKTRPPGFVISCSRPKTMPQSYLRYLSNGLRNTFDMPGVPIRISLRASDNPFAARSKKK.

2 EngA-type G domains span residues 3-167 and 206-382; these read LTIA…GKER and LRIA…RMWN. Residues 9 to 16, 56 to 60, 119 to 122, 212 to 219, 259 to 263, and 324 to 327 each bind GTP; these read GRPNVGKS, DTAGL, NKSE, GRPNTGKS, and NKWD. The KH-like domain occupies 383–467; sequence RRISTAKLNR…PIRISLRASD (85 aa).

Belongs to the TRAFAC class TrmE-Era-EngA-EngB-Septin-like GTPase superfamily. EngA (Der) GTPase family. As to quaternary structure, associates with the 50S ribosomal subunit.

Functionally, GTPase that plays an essential role in the late steps of ribosome biogenesis. This is GTPase Der from Bartonella quintana (strain Toulouse) (Rochalimaea quintana).